Here is a 1090-residue protein sequence, read N- to C-terminus: Solute carrier family 38 member 10 (1090 aa).

The next 10 membrane-spanning stretches (helical) occupy residues 9 to 31 (WGLI…PFCF), 36 to 58 (IVLG…MFLV), 84 to 104 (LVET…YVVI), 123 to 143 (TVRV…LSLQ), 153 to 173 (FSAM…LSSL), 229 to 249 (IFAS…FFGY), 272 to 292 (MIRV…ILPC), 323 to 343 (VLTL…PNVE), 345 to 365 (ILGF…PALI), and 378 to 398 (VVLW…LSVT). Position 441 is a phosphoserine (S441). Basic and acidic residues-rich tracts occupy residues 441-454 (SQEK…KEVL), 493-508 (EAHR…KVVV), 517-528 (PEEKKPPPRLPD), 544-560 (ESEK…EGKR), 587-596 (PRKEDSRPGN), and 607-623 (DSVE…REPA). Disordered stretches follow at residues 441–675 (SQEK…AGSK), 729–831 (EIRQ…IDLR), and 857–1037 (KAAP…ELAP). Residues S608 and S636 each carry the phosphoserine modification. Composition is skewed to basic and acidic residues over residues 654–665 (EAAEQREKKEAE), 729–744 (EIRQ…KPKP), and 758–767 (GQEEEAEHAG). T769 is subject to Phosphothreonine. Residue S887 is modified to Phosphoserine. Positions 923-936 (RQSGPTKAPVQTQA) are enriched in polar residues. Composition is skewed to basic and acidic residues over residues 954–973 (PEVR…EQHK), 1004–1013 (ENAKPNRDLK), and 1026–1037 (DLASHPEQELAP).

It belongs to the amino acid/polyamine transporter 2 family. In terms of tissue distribution, expressed in neurons, astrocytes and epithelial cells scattered throughout the central nervous system structures including striatum, ependyma, cerebral cortex, hippocampus, hypothalamus, thalamus, pons, and cerebellum (at protein level). Highly expressed in paraventricular hypothalamic nucleus, suprachiasmatic nucleus, anterior hypothalamic area central part, in lateral ventricule and in dorsal 3rd ventricule (at protein level). Expressed in choroid plexus epithelial cells (at protein level).

It is found in the membrane. It carries out the reaction L-glutamate(out) = L-glutamate(in). It catalyses the reaction L-glutamine(out) = L-glutamine(in). The catalysed reaction is L-alanine(in) = L-alanine(out). The enzyme catalyses L-serine(in) = L-serine(out). It carries out the reaction L-leucine(in) = L-leucine(out). Facilitates bidirectional transport of amino acids. May act as a glutamate sensor that regulates glutamate-glutamine cycle and mTOR signaling in the brain. The transport mechanism remains to be elucidated. The chain is Solute carrier family 38 member 10 from Mus musculus (Mouse).